Reading from the N-terminus, the 277-residue chain is uncharacterized protein (277 aa).

Helical transmembrane passes span 23–43 (CIGG…TAFI), 61–81 (FLIY…IIGG), 117–137 (LVLL…FGIF), 144–164 (IIGA…VISL), 197–217 (YIIL…IVVL), 221–241 (IIDI…IIYI), and 243–263 (IKGI…VFSI).

It to M.jannaschii MJ1189.

It localises to the cell membrane. This is an uncharacterized protein from Methanocaldococcus jannaschii (strain ATCC 43067 / DSM 2661 / JAL-1 / JCM 10045 / NBRC 100440) (Methanococcus jannaschii).